Consider the following 137-residue polypeptide: Protein apnoia (137 aa).

3 consecutive transmembrane segments (helical) span residues 7-27 (IVFA…QQQA), 55-75 (LVPG…LTVV), and 76-96 (SIKG…QMLS).

In terms of assembly, interacts with crb.

The protein resides in the apical cell membrane. Its function is as follows. Transmembrane protein that plays a key role in trachea development by regulating crb localization and maintenance at the apical cell membrane. Required for anisotropic apical surface expansion important for tracheal tube elongation and lumen stability at larval stages. This Drosophila melanogaster (Fruit fly) protein is Protein apnoia.